The primary structure comprises 420 residues: Gamma-glutamyl phosphate reductase (420 aa).

Belongs to the gamma-glutamyl phosphate reductase family.

The protein resides in the cytoplasm. It carries out the reaction L-glutamate 5-semialdehyde + phosphate + NADP(+) = L-glutamyl 5-phosphate + NADPH + H(+). It functions in the pathway amino-acid biosynthesis; L-proline biosynthesis; L-glutamate 5-semialdehyde from L-glutamate: step 2/2. Catalyzes the NADPH-dependent reduction of L-glutamate 5-phosphate into L-glutamate 5-semialdehyde and phosphate. The product spontaneously undergoes cyclization to form 1-pyrroline-5-carboxylate. The protein is Gamma-glutamyl phosphate reductase of Cereibacter sphaeroides (strain KD131 / KCTC 12085) (Rhodobacter sphaeroides).